Consider the following 559-residue polypeptide: Potassium-transporting ATPase potassium-binding subunit (559 aa).

Transmembrane regions (helical) follow at residues 5 to 25 (GFLLLASYLLVLLVLARPLGT), 63 to 83 (LLAILLFNALGGLALFALLML), 131 to 151 (VGLTVQNFLSAATGIAVVFAL), 173 to 193 (ITLWLLLPLSLLVALFFIQQG), 254 to 274 (VQMLAIFLIPAALCFAFGEVV), 282 to 302 (AILWAMTLIFILCVAVVMWAE), 327 to 347 (FGILASSLFAVITTAASCGAV), 356 to 376 (ALGGMVPMWLMQIGEVVFGGV), 379 to 399 (GLYGMLLFVMLAVFIAGLMVG), 416 to 436 (MIALAILVTPTLVLLGTALAM), 483 to 503 (LLLAFCMLVGRFAVIIPVMAI), and 525 to 545 (ALFIGLLIGTVLLVGALTFIP).

This sequence belongs to the KdpA family. As to quaternary structure, the system is composed of three essential subunits: KdpA, KdpB and KdpC.

The protein resides in the cell inner membrane. Functionally, part of the high-affinity ATP-driven potassium transport (or Kdp) system, which catalyzes the hydrolysis of ATP coupled with the electrogenic transport of potassium into the cytoplasm. This subunit binds the periplasmic potassium ions and delivers the ions to the membrane domain of KdpB through an intramembrane tunnel. The protein is Potassium-transporting ATPase potassium-binding subunit of Klebsiella pneumoniae (strain 342).